A 528-amino-acid polypeptide reads, in one-letter code: Atypical kinase COQ8B, mitochondrial (528 aa).

A helical transmembrane segment spans residues 93–109 (LASFGGLAVGLGLGALA). The KxGQ motif motif lies at 151–154 (KIGQ). In terms of domain architecture, Protein kinase spans 187 to 419 (MMKVLEEELG…DRVLQKSQDL (233 aa)). The short motif at 212-215 (AAAS) is the AAAS motif element. Residues Ser215, Lys233, and 320–323 (MELA) contribute to the ATP site. The Proton acceptor role is filled by Asp363. Residues Asn368 and Asp382 each coordinate ATP.

This sequence belongs to the protein kinase superfamily. ADCK protein kinase family. As to quaternary structure, homodimer; homodimerizes via its transmembrane region. Interacts with COQ6 and COQ7. Interacts with the multi-subunit COQ enzyme complex, composed of at least COQ3, COQ4, COQ5, COQ6, COQ7 and COQ9. In terms of tissue distribution, in the kidney, expressed in glomeruli, predominantly in podocyte foot precesses, as well as in proximal tubules and collecting ducts (at protein level).

It is found in the mitochondrion membrane. It localises to the cytoplasm. Its subcellular location is the cytosol. The protein localises to the cell membrane. Its pathway is cofactor biosynthesis; ubiquinone biosynthesis. In terms of biological role, atypical kinase involved in the biosynthesis of coenzyme Q, also named ubiquinone, an essential lipid-soluble electron transporter for aerobic cellular respiration. Its substrate specificity is still unclear: may act as a protein kinase that mediates phosphorylation of COQ3. According to other reports, acts as a small molecule kinase, possibly a lipid kinase that phosphorylates a prenyl lipid in the ubiquinone biosynthesis pathway, as suggested by its ability to bind coenzyme Q lipid intermediates. However, the small molecule kinase activity was not confirmed by another publication. Required for podocyte migration. This is Atypical kinase COQ8B, mitochondrial from Rattus norvegicus (Rat).